The chain runs to 174 residues: Pituitary tumor-transforming gene 1 protein-interacting protein (174 aa).

Positions 1–29 (MASAVLGLTLRWVMFLSAVLLLLLPGASA) are cleaved as a signal peptide. Over 30–93 (QEPPGVGCSE…RWGVCWVNFE (64 aa)) the chain is Extracellular. Residues 36-89 (GCSEYTNRSCEECLRNVSCLWCNENKACLDYPVRKILPPASLCKLSSARWGVCW) form the PSI domain. 2 N-linked (GlcNAc...) asparagine glycosylation sites follow: N42 and N51. A helical transmembrane segment spans residues 94-114 (ALIITMSVLGGSVLLGITVCC). Residues 115–174 (CCCCRRKRSRKPDKSDERAMREQEERRVRQEERRAEMKSRHDEIRKKYGLFKEQNPYEKF) are Cytoplasmic-facing. The interval 126–155 (PDKSDERAMREQEERRVRQEERRAEMKSRH) is disordered. Residues 127 to 163 (DKSDERAMREQEERRVRQEERRAEMKSRHDEIRKKYG) adopt a coiled-coil conformation. The residue at position 171 (Y171) is a Phosphotyrosine.

As to quaternary structure, interacts with PTTG1.

The protein localises to the cell membrane. The protein resides in the cytoplasm. It localises to the nucleus. In terms of biological role, may facilitate PTTG1 nuclear translocation. This is Pituitary tumor-transforming gene 1 protein-interacting protein (Pttg1ip) from Rattus norvegicus (Rat).